The following is a 181-amino-acid chain: Adenylate kinase (181 aa).

10 to 15 (GAGKGT) provides a ligand contact to ATP. An NMP region spans residues 30–59 (STGDLFRANIGEGTPLGLEAKSYIDAGKLV). AMP is bound by residues Thr-31, Arg-36, 57–59 (KLV), 85–88 (GFPR), and Gln-92. The segment at 126–132 (ARGRADD) is LID. Arg-127 serves as a coordination point for ATP. AMP contacts are provided by Arg-129 and Arg-140. Gly-166 serves as a coordination point for ATP.

Belongs to the adenylate kinase family. In terms of assembly, monomer.

The protein resides in the cytoplasm. The enzyme catalyses AMP + ATP = 2 ADP. The protein operates within purine metabolism; AMP biosynthesis via salvage pathway; AMP from ADP: step 1/1. Catalyzes the reversible transfer of the terminal phosphate group between ATP and AMP. Plays an important role in cellular energy homeostasis and in adenine nucleotide metabolism. The sequence is that of Adenylate kinase from Corynebacterium aurimucosum (strain ATCC 700975 / DSM 44827 / CIP 107346 / CN-1) (Corynebacterium nigricans).